A 496-amino-acid chain; its full sequence is Probable malate:quinone oxidoreductase (496 aa).

Belongs to the MQO family. The cofactor is FAD.

The enzyme catalyses (S)-malate + a quinone = a quinol + oxaloacetate. Its pathway is carbohydrate metabolism; tricarboxylic acid cycle; oxaloacetate from (S)-malate (quinone route): step 1/1. This chain is Probable malate:quinone oxidoreductase, found in Prochlorococcus marinus (strain NATL1A).